The primary structure comprises 289 residues: SAGA-associated factor 29kDa (289 aa).

The stretch at A9–S36 forms a coiled coil. In terms of domain architecture, SGF29 C-terminal spans G137–G278. Histone H3K4me3 N-terminus binding stretches follow at residues D179–D181 and Q225–C228. Residues F249–D251 form a histone H3K4me3 binding region.

The protein belongs to the SGF29 family. As to quaternary structure, component of the Spt-Ada-Gcn5 acetyltransferase (SAGA) complex consisting of wda/Taf5L, Saf6, Taf9, Taf10b, Taf12, Ada1, Spt3, Spt7, Spt20, Sf3b3, Sf3b5, Nipped-A/Tra1, a histone acetyltransferase (HAT) module made up of Gcn5, Ada2b (Isoform B), Ada3 and Sgf29, and a deubiquitinase (DUB) module made up of not/nonstop, Sgf11, Atxn7 and e(y)2. Component of the Chiffon histone acetyltransferase (CHAT) complex consisting of Ada3, Sgf29, Gcn5, chif/chiffon and Ada2b (Isoform A).

Its subcellular location is the nucleus. Component of both the SAGA and CHAT histone acetyltransferase complexes, which both predominantly acetylate histone H3. In Drosophila melanogaster (Fruit fly), this protein is SAGA-associated factor 29kDa.